The chain runs to 231 residues: Orotidine 5'-phosphate decarboxylase (231 aa).

Substrate is bound by residues aspartate 9, lysine 34, 62 to 71 (DLKLHDIPSV), threonine 117, arginine 179, glutamine 188, glycine 208, and arginine 209. The Proton donor role is filled by lysine 64.

The protein belongs to the OMP decarboxylase family. Type 1 subfamily. As to quaternary structure, homodimer.

The catalysed reaction is orotidine 5'-phosphate + H(+) = UMP + CO2. The protein operates within pyrimidine metabolism; UMP biosynthesis via de novo pathway; UMP from orotate: step 2/2. Functionally, catalyzes the decarboxylation of orotidine 5'-monophosphate (OMP) to uridine 5'-monophosphate (UMP). The protein is Orotidine 5'-phosphate decarboxylase of Aquifex aeolicus (strain VF5).